The following is a 451-amino-acid chain: Chromosomal replication initiator protein DnaA (451 aa).

The domain I, interacts with DnaA modulators stretch occupies residues 1 to 71 (MSEKEIWDKV…QAIIYDVIGY (71 aa)). Residues 71 to 112 (YEVKPHFISEDELASYNNVNTQEVQEPQVQHSSIDDKTWGKE) form a domain II region. Positions 113-329 (QFNMHNTFDT…GALTRLLAYS (217 aa)) are domain III, AAA+ region. Glycine 157, glycine 159, lysine 160, and threonine 161 together coordinate ATP. Residues 330-451 (KLQGKPITTE…ENLEKEIRNQ (122 aa)) are domain IV, binds dsDNA.

It belongs to the DnaA family. In terms of assembly, oligomerizes as a right-handed, spiral filament on DNA at oriC.

The protein localises to the cytoplasm. In terms of biological role, plays an essential role in the initiation and regulation of chromosomal replication. ATP-DnaA binds to the origin of replication (oriC) to initiate formation of the DNA replication initiation complex once per cell cycle. Binds the DnaA box (a 9 base pair repeat at the origin) and separates the double-stranded (ds)DNA. Forms a right-handed helical filament on oriC DNA; dsDNA binds to the exterior of the filament while single-stranded (ss)DNA is stabiized in the filament's interior. The ATP-DnaA-oriC complex binds and stabilizes one strand of the AT-rich DNA unwinding element (DUE), permitting loading of DNA polymerase. After initiation quickly degrades to an ADP-DnaA complex that is not apt for DNA replication. Binds acidic phospholipids. The polypeptide is Chromosomal replication initiator protein DnaA (Staphylococcus epidermidis (strain ATCC 12228 / FDA PCI 1200)).